A 223-amino-acid polypeptide reads, in one-letter code: 7-cyano-7-deazaguanine synthase (223 aa).

8–18 (LSGGLDSATTL) serves as a coordination point for ATP. Zn(2+) contacts are provided by cysteine 187, cysteine 197, cysteine 200, and cysteine 203.

This sequence belongs to the QueC family. It depends on Zn(2+) as a cofactor.

The enzyme catalyses 7-carboxy-7-deazaguanine + NH4(+) + ATP = 7-cyano-7-deazaguanine + ADP + phosphate + H2O + H(+). Its pathway is purine metabolism; 7-cyano-7-deazaguanine biosynthesis. Its function is as follows. Catalyzes the ATP-dependent conversion of 7-carboxy-7-deazaguanine (CDG) to 7-cyano-7-deazaguanine (preQ(0)). The polypeptide is 7-cyano-7-deazaguanine synthase (Methylococcus capsulatus (strain ATCC 33009 / NCIMB 11132 / Bath)).